The chain runs to 261 residues: tRNA U34 carboxymethyltransferase (261 aa).

Carboxy-S-adenosyl-L-methionine contacts are provided by residues lysine 25, tryptophan 39, lysine 44, glycine 63, 114–115, tyrosine 135, and arginine 250; that span reads VE.

This sequence belongs to the class I-like SAM-binding methyltransferase superfamily. CmoB family. Homotetramer.

The enzyme catalyses carboxy-S-adenosyl-L-methionine + 5-hydroxyuridine(34) in tRNA = 5-carboxymethoxyuridine(34) in tRNA + S-adenosyl-L-homocysteine + H(+). In terms of biological role, catalyzes carboxymethyl transfer from carboxy-S-adenosyl-L-methionine (Cx-SAM) to 5-hydroxyuridine (ho5U) to form 5-carboxymethoxyuridine (cmo5U) at position 34 in tRNAs. The polypeptide is tRNA U34 carboxymethyltransferase (Helicobacter pylori (strain HPAG1)).